We begin with the raw amino-acid sequence, 120 residues long: Large ribosomal subunit protein bL20 (120 aa).

It belongs to the bacterial ribosomal protein bL20 family.

Its function is as follows. Binds directly to 23S ribosomal RNA and is necessary for the in vitro assembly process of the 50S ribosomal subunit. It is not involved in the protein synthesizing functions of that subunit. The protein is Large ribosomal subunit protein bL20 of Ligilactobacillus salivarius (strain UCC118) (Lactobacillus salivarius).